A 545-amino-acid polypeptide reads, in one-letter code: Resolvase homolog YokA (545 aa).

Residues 14 to 165 (NILGYLRRSR…GAKYTYAAQG (152 aa)) form the Resolvase/invertase-type recombinase catalytic domain. Positions 19–46 (LRRSRQDMEREKRTGEDTLTEQKELMNK) form a coiled coil. Catalysis depends on Ser22, which acts as the O-(5'-phospho-DNA)-serine intermediate. The recombinase DNA-binding region spans 173 to 303 (PYGYQLNKKT…VKIANKVPLL (131 aa)). The stretch at 402–475 (NMKTKKQMSE…QDTQSEIDSN (74 aa)) forms a coiled coil.

The protein in the N-terminal section; belongs to the site-specific recombinase resolvase family.

The chain is Resolvase homolog YokA (yokA) from Bacillus subtilis (strain 168).